A 100-amino-acid chain; its full sequence is Large ribosomal subunit protein bL28 (100 aa).

This sequence belongs to the bacterial ribosomal protein bL28 family.

The protein is Large ribosomal subunit protein bL28 of Gluconacetobacter diazotrophicus (strain ATCC 49037 / DSM 5601 / CCUG 37298 / CIP 103539 / LMG 7603 / PAl5).